The sequence spans 46 residues: uncharacterized protein (46 aa).

The disordered stretch occupies residues 1-46 (MEVTPLETGRARSHQKASTAAQPHAADEKMTGSTARRYLSQDHQSV).

This is an uncharacterized protein from Treponema pallidum (strain Nichols).